Here is a 170-residue protein sequence, read N- to C-terminus: Flavin reductase (NADPH) (170 aa).

The protein belongs to the non-flavoprotein flavin reductase family.

The enzyme catalyses reduced riboflavin + NADP(+) = riboflavin + NADPH + 2 H(+). Functionally, catalyzes the NADH-dependent reduction of FAD to provide FADH2 for the halogenase RebH. This Lentzea aerocolonigenes (Lechevalieria aerocolonigenes) protein is Flavin reductase (NADPH) (rbmH).